A 246-amino-acid chain; its full sequence is Ubiquitin-conjugating enzyme E2 6 (246 aa).

Residues 1-224 lie on the Cytoplasmic side of the membrane; the sequence is MATKQAQKRL…LEKQHNDKPN (224 aa). The UBC core domain occupies 5 to 154; that stretch reads QAQKRLTKEY…FNSTRFKLVF (150 aa). Catalysis depends on Cys-87, which acts as the Glycyl thioester intermediate. The helical transmembrane segment at 225-245 threads the bilayer; it reads GSSSMFYIGVALFLFLVGLFM.

The protein belongs to the ubiquitin-conjugating enzyme family.

It is found in the endoplasmic reticulum membrane. It catalyses the reaction S-ubiquitinyl-[E1 ubiquitin-activating enzyme]-L-cysteine + [E2 ubiquitin-conjugating enzyme]-L-cysteine = [E1 ubiquitin-activating enzyme]-L-cysteine + S-ubiquitinyl-[E2 ubiquitin-conjugating enzyme]-L-cysteine.. It functions in the pathway protein modification; protein ubiquitination. Catalyzes the covalent attachment of ubiquitin to other proteins. Functions in degradation of misfolded or regulated proteins localized in the endoplasmic reticulum (ER) lumen or membrane via the ubiquitin-proteasome system. Cognate E2 conjugating enzyme for the DOA10 ubiquitin ligase complex, which is part of the ERAD-C pathway responsible for the rapid degradation of membrane proteins with misfolded cytoplasmic domains. The chain is Ubiquitin-conjugating enzyme E2 6 (UBC6) from Candida glabrata (strain ATCC 2001 / BCRC 20586 / JCM 3761 / NBRC 0622 / NRRL Y-65 / CBS 138) (Yeast).